Consider the following 178-residue polypeptide: Large ribosomal subunit protein eL20 (178 aa).

This sequence belongs to the eukaryotic ribosomal protein eL20 family.

The sequence is that of Large ribosomal subunit protein eL20 (RPL18A) from Castanea sativa (Sweet chestnut).